An 879-amino-acid polypeptide reads, in one-letter code: MTQEYSTLRNNISMLGRFLGETINDAQGEDILELIENIRKLSRNSRAGDDKARQALLDTLGSISNENIIPVARAFSQFLNLTNIAEQYQTISREHSLAQSSSQSLSELFKRLKEQNASVEEVHKTVEKLLIELVLTAHPTETTRRSLIHKHIEINKCLSKLEHHDLTEKERNIIERLLLRLIAEAWHTNEIRTVRPTPFDEAKWGFAMLENSLWQAVPEFLRQLNETAREFLGYDLPVGLKPVRISSWMGGDRDGNPFVTAQITKKVLYFARWKAADLFLQDISKLADELSMMKCSDEFRDKYGEHLEPYRFVVKNLRNQLTATLAYFDDHLSNRTPRVSESEIILEDNQLWEPLYDCYQSLIQCGMRIIANGSLLDILHRISCFGVTLSQMDIRQESTRHTDAIAEIMRYIGLGDYSQWMEDDKQAFLIRELSSRRPLIPQNWTPSPETKEILDTCKVIAQQKQGVIACYVISMARSASDVLAVHLLLKEAGVPYHIPVVPLFETLEDLDAAEKVMTQLFNVGWYRGVINNRQMVMIGYSDSAKDAGMMAASWAQYRAQEALVNLTEKLGIELTLFHGRGGTIGRGGAPAHAALLSQPPRSLKNGLRVTEQGEMIRFKLGLPAVAVETFDLYASAILEANLLPPPEPKPEWRTIMDELSTISCDIYRGVVRGDKDFVPYFRSATPEQELSKLPLGSRPAKRNPNGGVESLRAIPWIFAWMQNRLMLPAWLGAGAAIRQVIEQGKGDIIHKMCENWPFFSTRIGMLEMVFSKSDTWLSQQYDQRLVKKELWYLGENLRKQLEDDIQTVLSLSHQSELMSDLPWIADSIALRNIYTDPLNLLQVELLHRFRENPEQVNPDVEQALMITITGIAAGMRNTG.

Catalysis depends on residues histidine 138 and lysine 545.

It belongs to the PEPCase type 1 family. Mg(2+) is required as a cofactor.

It carries out the reaction oxaloacetate + phosphate = phosphoenolpyruvate + hydrogencarbonate. In terms of biological role, forms oxaloacetate, a four-carbon dicarboxylic acid source for the tricarboxylic acid cycle. The polypeptide is Phosphoenolpyruvate carboxylase (Haemophilus influenzae (strain 86-028NP)).